Reading from the N-terminus, the 789-residue chain is Cadherin-6 (789 aa).

Residues 1-18 (MRTYRYFLLLFWVGQPYP) form the signal peptide. Positions 19–53 (TFSNPLSKRTSGFPAKRRALELSANSRNELSRSKR) are excised as a propeptide. 5 Cadherin domains span residues 54–159 (SWMW…EPIF), 160–268 (TKDV…PPRF), 269–383 (PQST…PPVF), 384–486 (SKPA…DNAP), and 487–608 (EFAE…LIHP). Residues 54–615 (SWMWNQFFLL…IHPTGLSTGA (562 aa)) are Extracellular-facing. Residue Asn-255 is glycosylated (N-linked (GlcNAc...) asparagine). The segment at 259–288 (TDVNDNPPRFPQSTYQFKTPESSPPGTPIG) is disordered. Positions 269–279 (PQSTYQFKTPE) are enriched in polar residues. Residues Asn-399, Asn-437, Asn-455, and Asn-536 are each glycosylated (N-linked (GlcNAc...) asparagine). A helical membrane pass occupies residues 616–636 (LVAILLCIVILLVTVVLFAAL). At 637-789 (RRQRKKEPLI…YGGMDSDKDS (153 aa)) the chain is on the cytoplasmic side. A phosphoserine mark is found at Ser-785 and Ser-789.

In terms of tissue distribution, highly expressed in kidney and brain.

It localises to the cell membrane. Its function is as follows. Cadherins are calcium-dependent cell adhesion proteins. They preferentially interact with themselves in a homophilic manner in connecting cells; cadherins may thus contribute to the sorting of heterogeneous cell types. In Rattus norvegicus (Rat), this protein is Cadherin-6 (Cdh6).